The primary structure comprises 210 residues: GRF1-interacting factor 1 (210 aa).

The span at 135 to 152 (ATLQHQQLHHSQLGMSSS) shows a compositional bias: low complexity. Residues 135–210 (ATLQHQQLHH…LYLKSSDDGN (76 aa)) are disordered. Over residues 182-198 (GSGGGGEGRGGSSGDGG) the composition is skewed to gly residues.

This sequence belongs to the SS18 family. In terms of assembly, interacts with GRF1, GRF2, GRF5 and GRF9. As to expression, strongly expressed in actively growing and developing tissues, such as roots, upper stems, and shoot tips and flower buds. Also expressed in mature flowers. Not expressed in the shoot apical meristem (SAM). Highly accumulated in the proximal part of leaf primordia, in the key proliferative zone at the junction region between the leaf blade and leaf petiole.

Functionally, transcription coactivator that plays a role in the regulation of cell expansion in leaf and cotyledons tissues. Component of a network formed by miR396, the GRFs and their interacting factors (GIFs) acting in the regulation of meristem function, at least partially through the control of cell proliferation. Appears to function synergistically with GRF1 as a transcriptional coactivator. Acts together with GRF5 for the development of appropriate leaf size and shape through the promotion and/or maintenance of cell proliferation activity in leaf primordia. Plays a role in adaxial/abaxial patterning and growth in leaf morphogenesis. GIFs are involved in the positive regulation of cell proliferation of lateral organs in a functionally redundant manner. Together with GATA18/HAN, mediates cotyledon identity by preventing ectopic root formation through the repression of PLT1 expression. This Arabidopsis thaliana (Mouse-ear cress) protein is GRF1-interacting factor 1.